A 292-amino-acid polypeptide reads, in one-letter code: 4'-phosphopantetheinyl transferase 1 (292 aa).

It belongs to the P-Pant transferase superfamily.

The enzyme catalyses apo-[ACP] + CoA = holo-[ACP] + adenosine 3',5'-bisphosphate + H(+). In terms of biological role, transfers the 4'-phosphopantetheine moiety from coenzyme A to a Ser of an acyl-carrier-protein. The enzyme is able to transfer the cofactor to a broad range of enzymes with acyl- or peptidyl-carrier protein domains. Required for primary biological processes such as growth and asexual/sexual development, and activates target enzymes involved in the synthesis of metabolites such as fatty acids, nonribosomal peptides and polyketides such as the gamma-pyrones fusapyrone (FPY) and deoxyfusapyrone (dFPY). The polypeptide is 4'-phosphopantetheinyl transferase 1 (Fusarium mangiferae (Mango malformation disease fungus)).